A 180-amino-acid polypeptide reads, in one-letter code: Bifunctional protein PyrR (180 aa).

Positions valine 99–threonine 111 match the PRPP-binding motif.

This sequence belongs to the purine/pyrimidine phosphoribosyltransferase family. PyrR subfamily. In terms of assembly, homodimer and homohexamer; in equilibrium.

The catalysed reaction is UMP + diphosphate = 5-phospho-alpha-D-ribose 1-diphosphate + uracil. Functionally, regulates transcriptional attenuation of the pyrimidine nucleotide (pyr) operon by binding in a uridine-dependent manner to specific sites on pyr mRNA. This disrupts an antiterminator hairpin in the RNA and favors formation of a downstream transcription terminator, leading to a reduced expression of downstream genes. Also displays a weak uracil phosphoribosyltransferase activity which is not physiologically significant. In Clostridium botulinum (strain Eklund 17B / Type B), this protein is Bifunctional protein PyrR.